The primary structure comprises 349 residues: Isopentenyl-diphosphate delta-isomerase (349 aa).

Position 7 to 8 (7 to 8 (RK)) interacts with substrate. FMN contacts are provided by residues serine 65, 66-68 (SMT), serine 96, and asparagine 124. 96 to 98 (SQR) contributes to the substrate binding site. Glutamine 159 lines the substrate pocket. Glutamate 160 provides a ligand contact to Mg(2+). Residues lysine 191, threonine 221, 271 to 273 (GIR), and 292 to 293 (AA) contribute to the FMN site.

The protein belongs to the IPP isomerase type 2 family. As to quaternary structure, homooctamer. Dimer of tetramers. Requires FMN as cofactor. NADPH is required as a cofactor. The cofactor is Mg(2+).

The protein localises to the cytoplasm. It carries out the reaction isopentenyl diphosphate = dimethylallyl diphosphate. Its function is as follows. Involved in the biosynthesis of isoprenoids. Catalyzes the 1,3-allylic rearrangement of the homoallylic substrate isopentenyl (IPP) to its allylic isomer, dimethylallyl diphosphate (DMAPP). The protein is Isopentenyl-diphosphate delta-isomerase of Synechocystis sp. (strain ATCC 27184 / PCC 6803 / Kazusa).